A 245-amino-acid polypeptide reads, in one-letter code: Small ribosomal subunit protein uS2 (245 aa).

It belongs to the universal ribosomal protein uS2 family.

In Pseudomonas fluorescens (strain Pf0-1), this protein is Small ribosomal subunit protein uS2.